A 396-amino-acid polypeptide reads, in one-letter code: uncharacterized protein (396 aa).

This is an uncharacterized protein from Psittacid herpesvirus 1 (isolate Amazon parrot/-/97-0001/1997) (PsHV-1).